The primary structure comprises 273 residues: Ribosomal RNA small subunit methyltransferase A (273 aa).

Residues Asn18, Leu20, Gly45, Glu66, Asp91, and Asn113 each contribute to the S-adenosyl-L-methionine site.

The protein belongs to the class I-like SAM-binding methyltransferase superfamily. rRNA adenine N(6)-methyltransferase family. RsmA subfamily.

The protein resides in the cytoplasm. It catalyses the reaction adenosine(1518)/adenosine(1519) in 16S rRNA + 4 S-adenosyl-L-methionine = N(6)-dimethyladenosine(1518)/N(6)-dimethyladenosine(1519) in 16S rRNA + 4 S-adenosyl-L-homocysteine + 4 H(+). In terms of biological role, specifically dimethylates two adjacent adenosines (A1518 and A1519) in the loop of a conserved hairpin near the 3'-end of 16S rRNA in the 30S particle. May play a critical role in biogenesis of 30S subunits. In Escherichia coli O1:K1 / APEC, this protein is Ribosomal RNA small subunit methyltransferase A.